The primary structure comprises 334 residues: DCN1-like protein 3 (334 aa).

Positions 112–301 constitute a DCUN1 domain; that stretch reads VSHQTLSKLF…LFDDFVDYEK (190 aa). The interval 308-334 is disordered; that stretch reads SGIHDDDNNNDDPLQSHVKAEDPGLVS. Over residues 325–334 the composition is skewed to basic and acidic residues; it reads VKAEDPGLVS.

The protein resides in the cell membrane. In terms of biological role, promotes neddylation of cullin components of SCF-type E3 ubiquitin ligase complexes and thus regulates SCF-type complex activity. Function promotes cell proliferation. The sequence is that of DCN1-like protein 3 from Drosophila melanogaster (Fruit fly).